The primary structure comprises 108 residues: UPF0060 membrane protein CKO_01576 (108 aa).

Transmembrane regions (helical) follow at residues 6–26, 29–49, 61–81, and 85–105; these read LLFF…WLWL, GATA…VWLL, AAYG…VDGV, and LYDW…VAGW.

This sequence belongs to the UPF0060 family.

It localises to the cell inner membrane. This chain is UPF0060 membrane protein CKO_01576, found in Citrobacter koseri (strain ATCC BAA-895 / CDC 4225-83 / SGSC4696).